Consider the following 1341-residue polypeptide: DNA-directed RNA polymerase subunit beta (1341 aa).

The protein belongs to the RNA polymerase beta chain family. In terms of assembly, the RNAP catalytic core consists of 2 alpha, 1 beta, 1 beta' and 1 omega subunit. When a sigma factor is associated with the core the holoenzyme is formed, which can initiate transcription.

It catalyses the reaction RNA(n) + a ribonucleoside 5'-triphosphate = RNA(n+1) + diphosphate. DNA-dependent RNA polymerase catalyzes the transcription of DNA into RNA using the four ribonucleoside triphosphates as substrates. The polypeptide is DNA-directed RNA polymerase subunit beta (Pseudoalteromonas translucida (strain TAC 125)).